The chain runs to 233 residues: Ribonuclease HII (233 aa).

The RNase H type-2 domain maps to lysine 21–leucine 211. Positions 27, 28, and 119 each coordinate a divalent metal cation.

Belongs to the RNase HII family. Mn(2+) serves as cofactor. It depends on Mg(2+) as a cofactor.

The protein localises to the cytoplasm. It catalyses the reaction Endonucleolytic cleavage to 5'-phosphomonoester.. Endonuclease that specifically degrades the RNA of RNA-DNA hybrids. This Streptomyces avermitilis (strain ATCC 31267 / DSM 46492 / JCM 5070 / NBRC 14893 / NCIMB 12804 / NRRL 8165 / MA-4680) protein is Ribonuclease HII.